The following is a 198-amino-acid chain: dTTP/UTP pyrophosphatase (198 aa).

The active-site Proton acceptor is Asp75.

This sequence belongs to the Maf family. YhdE subfamily. The cofactor is a divalent metal cation.

It is found in the cytoplasm. The enzyme catalyses dTTP + H2O = dTMP + diphosphate + H(+). It carries out the reaction UTP + H2O = UMP + diphosphate + H(+). Functionally, nucleoside triphosphate pyrophosphatase that hydrolyzes dTTP and UTP. May have a dual role in cell division arrest and in preventing the incorporation of modified nucleotides into cellular nucleic acids. This is dTTP/UTP pyrophosphatase from Wolbachia sp. subsp. Drosophila simulans (strain wRi).